Here is a 125-residue protein sequence, read N- to C-terminus: MAFDKDAFLTALDGMTVLELNDLVKAIEEKFGVSAAAMAAPAAGGAAGGAAAAEEKTEFNVVLTEAGANKVSVIKAVREITGLGLKEAKDLVDGAPKNVKEGVAKADAEAAVKKLVEAGAKAELK.

The protein belongs to the bacterial ribosomal protein bL12 family. In terms of assembly, homodimer. Part of the ribosomal stalk of the 50S ribosomal subunit. Forms a multimeric L10(L12)X complex, where L10 forms an elongated spine to which 2 to 4 L12 dimers bind in a sequential fashion. Binds GTP-bound translation factors.

In terms of biological role, forms part of the ribosomal stalk which helps the ribosome interact with GTP-bound translation factors. Is thus essential for accurate translation. This is Large ribosomal subunit protein bL12 from Delftia acidovorans (strain DSM 14801 / SPH-1).